We begin with the raw amino-acid sequence, 111 residues long: N-alpha-acetyltransferase 38-B, NatC auxiliary subunit (111 aa).

The region spanning 28 to 106 is the Sm domain; the sequence is TARHKLESLL…IVSIQVELET (79 aa).

The protein belongs to the snRNP Sm proteins family. In terms of assembly, component of the N-terminal acetyltransferase C (NatC) complex, which is composed of naa35, naa38 and naa30.

The protein resides in the cytoplasm. Auxillary component of the N-terminal acetyltransferase C (NatC) complex which catalyzes acetylation of N-terminal methionine residues. The polypeptide is N-alpha-acetyltransferase 38-B, NatC auxiliary subunit (naa38-b) (Xenopus laevis (African clawed frog)).